The sequence spans 688 residues: DNA ligase (688 aa).

NAD(+) contacts are provided by residues 51 to 55, 100 to 101, and Glu-129; these read DSEYD and SL. Lys-131 acts as the N6-AMP-lysine intermediate in catalysis. The NAD(+) site is built by Arg-152, Glu-189, Lys-308, and Lys-332. Zn(2+) contacts are provided by Cys-426, Cys-429, Cys-444, and Cys-450. The BRCT domain occupies 609–688; the sequence is ADEQPLKGQT…DELLALLANS (80 aa).

It belongs to the NAD-dependent DNA ligase family. LigA subfamily. The cofactor is Mg(2+). It depends on Mn(2+) as a cofactor.

It catalyses the reaction NAD(+) + (deoxyribonucleotide)n-3'-hydroxyl + 5'-phospho-(deoxyribonucleotide)m = (deoxyribonucleotide)n+m + AMP + beta-nicotinamide D-nucleotide.. In terms of biological role, DNA ligase that catalyzes the formation of phosphodiester linkages between 5'-phosphoryl and 3'-hydroxyl groups in double-stranded DNA using NAD as a coenzyme and as the energy source for the reaction. It is essential for DNA replication and repair of damaged DNA. The chain is DNA ligase from Shewanella sp. (strain MR-4).